Reading from the N-terminus, the 218-residue chain is MKFFVDSANIEEIQELQNLNLVDGVTTNPSLILKSGRNILEVTKEICTLVVHGPVSAEVAATEFEDIMKEAAVLANIADNICIKLPLTFDGLKACKALTAQGLKTNLTLCFSANQALLAAKAGATFISPFVGRLDDYGINGSDLLHEIRTIYNNYSFETQILAASIRTINHVKEAALSGADVATIPPTILKALIKHPLTEKGLQSFLEDWKKTGQNIA.

The Schiff-base intermediate with substrate role is filled by K84.

The protein belongs to the transaldolase family. Type 3B subfamily.

The protein localises to the cytoplasm. It carries out the reaction D-sedoheptulose 7-phosphate + D-glyceraldehyde 3-phosphate = D-erythrose 4-phosphate + beta-D-fructose 6-phosphate. It participates in carbohydrate degradation; pentose phosphate pathway; D-glyceraldehyde 3-phosphate and beta-D-fructose 6-phosphate from D-ribose 5-phosphate and D-xylulose 5-phosphate (non-oxidative stage): step 2/3. Its function is as follows. Transaldolase is important for the balance of metabolites in the pentose-phosphate pathway. The chain is Probable transaldolase from Bartonella henselae (strain ATCC 49882 / DSM 28221 / CCUG 30454 / Houston 1) (Rochalimaea henselae).